A 317-amino-acid polypeptide reads, in one-letter code: Melanocyte-stimulating hormone receptor (317 aa).

At 1 to 37 (MPVQGSQRRLLGSLNSTPTATPHLGLAANQTGARCLE) the chain is on the extracellular side. Asn-29 carries N-linked (GlcNAc...) asparagine glycosylation. A helical membrane pass occupies residues 38–63 (VSIPDGLFLSLGLVSLVENVLVVTAI). Topologically, residues 64–72 (AKNRNLHSP) are cytoplasmic. A helical membrane pass occupies residues 73 to 93 (MYCFICCLALSDLLVSGSNML). At 94–118 (ETAVILLLEAGALAARAAVVQQLDN) the chain is on the extracellular side. A helical membrane pass occupies residues 119–140 (VIDVITCSSMLSSLCFLGAIAV). The Cytoplasmic portion of the chain corresponds to 141-163 (DRYISIFYALRYHSIVTLPRARR). Residues 164-183 (AVAAIWVASVLFSMLFIAYY) form a helical membrane-spanning segment. Over 184–191 (DHAAVLLC) the chain is Extracellular. Residues 192–211 (LVVFFLAMLVLMAVLYVHML) traverse the membrane as a helical segment. Residues 212–240 (ARACQHAQGIARLHKRQCPAHQGFGLKGA) lie on the Cytoplasmic side of the membrane. Residues 241-266 (ATLTILLGIFFLCWGPFFLHLTLIVL) traverse the membrane as a helical segment. Residues 267-279 (CPQHPTCSCIFKN) are Extracellular-facing. A helical transmembrane segment spans residues 280–300 (FNLFLALIICNAIIDPLIYAF). Topologically, residues 301–317 (RSQELRRTLKEVLLCSW) are cytoplasmic. Cys-315 carries the S-palmitoyl cysteine lipid modification.

Belongs to the G-protein coupled receptor 1 family. In terms of assembly, interacts with MGRN1, but does not undergo MGRN1-mediated ubiquitination; this interaction competes with GNAS-binding and thus inhibits agonist-induced cAMP production. Interacts with OPN3; the interaction results in a decrease in MC1R-mediated cAMP signaling and ultimately a decrease in melanin production in melanocytes.

It is found in the cell membrane. In terms of biological role, receptor for MSH (alpha, beta and gamma) and ACTH. The activity of this receptor is mediated by G proteins which activate adenylate cyclase. Mediates melanogenesis, the production of eumelanin (black/brown) and phaeomelanin (red/yellow), via regulation of cAMP signaling in melanocytes. This is Melanocyte-stimulating hormone receptor (MC1R) from Chlorocebus aethiops (Green monkey).